The sequence spans 545 residues: Membrane protein insertase YidC (545 aa).

A helical membrane pass occupies residues 8-28 (ILLATVLSVGILILWQVIFPK). The tract at residues 31 to 69 (PPKPAPTPAAEVAKPAAPAAPAPGAAAPAVPAPPPDAPE) is disordered. Low complexity predominate over residues 38–59 (PAAEVAKPAAPAAPAPGAAAPA). 5 consecutive transmembrane segments (helical) span residues 325 to 345 (IDYG…LYVM), 355 to 375 (WGVA…PLTY), 421 to 441 (LGGC…YAAL), 458 to 478 (LTAH…SFVM), and 497 to 517 (FFPG…TLYI).

This sequence belongs to the OXA1/ALB3/YidC family. Type 1 subfamily. As to quaternary structure, interacts with the Sec translocase complex via SecD. Specifically interacts with transmembrane segments of nascent integral membrane proteins during membrane integration.

Its subcellular location is the cell inner membrane. Required for the insertion and/or proper folding and/or complex formation of integral membrane proteins into the membrane. Involved in integration of membrane proteins that insert both dependently and independently of the Sec translocase complex, as well as at least some lipoproteins. Aids folding of multispanning membrane proteins. In Anaeromyxobacter dehalogenans (strain 2CP-C), this protein is Membrane protein insertase YidC.